The following is a 440-amino-acid chain: Protein CapE (440 aa).

12 helical membrane passes run 7 to 27 (VILIINFVTVLFSIFTFIGYL), 31 to 51 (IGFRVVTISLCITIAMTVYLL), 60 to 80 (LVYLIYLFLTNFGVFVTNIFL), 102 to 122 (FSIATFAILTFTILSNFISVF), 141 to 161 (FYYTGILFIIGFTIQFLFYII), 179 to 199 (ELPMYTYGIFFFSIGIAFAFS), 204 to 224 (THIKYLVIILTPQVLFFLITG), 249 to 269 (WWMIITIVFTLFFVIPFIKVF), 324 to 344 (IFSYIIPGLQPVNYEMVGYGF), 360 to 380 (YYNGAIVGVLIVMVLLVLLLW), 382 to 402 (FTNFKSFEMLSMGTAIVSVLI), and 409 to 429 (FSFVPAYILIIIVIVIILLFI).

It localises to the cell membrane. The protein operates within capsule biogenesis; capsule polysaccharide biosynthesis. Required for the biosynthesis of type 1 capsular polysaccharide. The sequence is that of Protein CapE (capE) from Staphylococcus aureus.